The sequence spans 400 residues: Tryptophan synthase beta chain (400 aa).

At K91 the chain carries N6-(pyridoxal phosphate)lysine.

This sequence belongs to the TrpB family. Tetramer of two alpha and two beta chains. Requires pyridoxal 5'-phosphate as cofactor.

It carries out the reaction (1S,2R)-1-C-(indol-3-yl)glycerol 3-phosphate + L-serine = D-glyceraldehyde 3-phosphate + L-tryptophan + H2O. The protein operates within amino-acid biosynthesis; L-tryptophan biosynthesis; L-tryptophan from chorismate: step 5/5. Functionally, the beta subunit is responsible for the synthesis of L-tryptophan from indole and L-serine. The sequence is that of Tryptophan synthase beta chain from Listeria monocytogenes serovar 1/2a (strain ATCC BAA-679 / EGD-e).